The sequence spans 359 residues: Type-1 angiotensin II receptor B (359 aa).

Over 1 to 25 (MTLNSSTEDGIKRIQDDCPKAGRHN) the chain is Extracellular. The N-linked (GlcNAc...) asparagine glycan is linked to asparagine 4. The angiotensin II site is built by glutamine 15 and aspartate 17. 2 cysteine pairs are disulfide-bonded: cysteine 18–cysteine 274 and cysteine 101–cysteine 180. The helical transmembrane segment at 26–55 (YIFVMIPTLYSIIFVVGIFGNSLVVIVIYF) threads the bilayer. At 56–61 (YMKLKT) the chain is on the cytoplasmic side. A helical transmembrane segment spans residues 62–89 (VASVFLLNLALADLCFLLTLPLWAVYTA). Residues 90–98 (MEYRWPFGN) lie on the Extracellular side of the membrane. A helical membrane pass occupies residues 99–125 (HLCKIASASVSFNLYASVFLLTCLSID). Residues 126–141 (RYLAIVHPMKSRLRRT) lie on the Cytoplasmic side of the membrane. The helical transmembrane segment at 142–165 (MLVAKVTCIIIWLMAGLASLPAVI) threads the bilayer. At 166-190 (YRNVYFIENTNITVCAFHYESQNST) the chain is on the extracellular side. Residue arginine 167 coordinates angiotensin II. N-linked (GlcNAc...) asparagine glycosylation occurs at asparagine 176. Phenylalanine 182, histidine 183, and tyrosine 184 together coordinate angiotensin II. Asparagine 188 is a glycosylation site (N-linked (GlcNAc...) asparagine). Residues 191 to 216 (LPIGLGLTKNILGFVFPFLIILTSYT) traverse the membrane as a helical segment. Residue lysine 199 participates in angiotensin II binding. The Cytoplasmic segment spans residues 217–239 (LIWKALKKAYKIQKNTPRNDDIF). A helical membrane pass occupies residues 240–268 (RIIMAIVLFFFFSWVPHQIFTFLDVLIQL). Topologically, residues 269-278 (GIIRDCEIAD) are extracellular. A helical transmembrane segment spans residues 279–304 (IVDTAMPITICIAYFNNCLNPLFYGF). Residues 305 to 359 (LGKKFKKYFLQLLKYIPPTAKSHAGLSTKMSTLSYRPSDNMSSSAKKSASFFEVE) lie on the Cytoplasmic side of the membrane. Residues 339–359 (YRPSDNMSSSAKKSASFFEVE) are disordered. The span at 346 to 359 (SSSAKKSASFFEVE) shows a compositional bias: low complexity.

The protein belongs to the G-protein coupled receptor 1 family. In terms of assembly, interacts with MAS1. Interacts with ARRB1. Interacts with FLNA (via filamin repeat 21); increases PKA-mediated phosphorylation of FLNA. In terms of processing, C-terminal Ser or Thr residues may be phosphorylated. In terms of tissue distribution, is expressed in the liver, kidney, aorta, lung, uterus, ovary, spleen, heart, and vascular smooth muscle cell. Expressed most abundantly in the adrenal gland.

The protein resides in the cell membrane. Functionally, receptor for angiotensin II, a vasoconstricting peptide, which acts as a key regulator of blood pressure and sodium retention by the kidney. The activated receptor in turn couples to G-alpha proteins G(q) (GNAQ, GNA11, GNA14 or GNA15) and thus activates phospholipase C and increases the cytosolic Ca(2+) concentrations, which in turn triggers cellular responses such as stimulation of protein kinase C. The chain is Type-1 angiotensin II receptor B (Agtr1b) from Rattus norvegicus (Rat).